A 296-amino-acid polypeptide reads, in one-letter code: Nucleotide-binding protein SZO_12220 (296 aa).

ATP is bound at residue 13-20 (GMSGAGKT). 63–66 (DMRS) serves as a coordination point for GTP.

Belongs to the RapZ-like family.

In terms of biological role, displays ATPase and GTPase activities. This chain is Nucleotide-binding protein SZO_12220, found in Streptococcus equi subsp. zooepidemicus (strain H70).